Consider the following 397-residue polypeptide: MNYAYPDEKGHYGIYGGRYVPETLMQSVLELEEAYKEAMEDEAFQKELNHYLKTYVGRETPLYFAENMTEYCGGAKIYLKREDLNHTGAHKINNTIGQALLAVRMGKKKVVAETGAGQHGVATATVCALLGLECVIFMGEEDVRRQKLNVFRMELLGAKVESVAAGSGTLKDAVNEALRYWVSHVHDTHYIMGSVLGPHPFPQIVRDFQSVIGNETKKQYEALEGKLPEAVVACIGGGSNAMGMFYPFVHDEEVALYGVEAAGKGVHTEKHAATLTKGSVGVLHGSMMYLLQNEEGQIQEAHSISAGLDYPGVGPEHSLLKDIGRVSYHSITDDEALEAFQLLTKKEGIIPALESSHAVAYALKLAPQMKEDEGLVICLSGRGDKDVESIKRYMEEV.

Lysine 91 is subject to N6-(pyridoxal phosphate)lysine.

Belongs to the TrpB family. In terms of assembly, tetramer of two alpha and two beta chains. Pyridoxal 5'-phosphate serves as cofactor.

It carries out the reaction (1S,2R)-1-C-(indol-3-yl)glycerol 3-phosphate + L-serine = D-glyceraldehyde 3-phosphate + L-tryptophan + H2O. Its pathway is amino-acid biosynthesis; L-tryptophan biosynthesis; L-tryptophan from chorismate: step 5/5. In terms of biological role, the beta subunit is responsible for the synthesis of L-tryptophan from indole and L-serine. This is Tryptophan synthase beta chain from Bacillus anthracis (strain A0248).